The chain runs to 152 residues: Transcriptional regulator MraZ (152 aa).

SpoVT-AbrB domains are found at residues isoleucine 7–glutamate 54 and alanine 83–alanine 126.

This sequence belongs to the MraZ family. Forms oligomers.

It is found in the cytoplasm. Its subcellular location is the nucleoid. The protein is Transcriptional regulator MraZ of Hydrogenovibrio crunogenus (strain DSM 25203 / XCL-2) (Thiomicrospira crunogena).